The sequence spans 201 residues: CASP-like protein 2B2 (201 aa).

The Cytoplasmic portion of the chain corresponds to M1 to R28. A helical membrane pass occupies residues V29–I49. At A50–K71 the chain is on the extracellular side. The chain crosses the membrane as a helical span at residues A72 to V92. The Cytoplasmic segment spans residues R93–P108. Residues L109–A129 form a helical membrane-spanning segment. Residues A130–A166 are Extracellular-facing. Residues S167–F187 traverse the membrane as a helical segment. Topologically, residues R188 to W201 are cytoplasmic.

The protein belongs to the Casparian strip membrane proteins (CASP) family. Homodimer and heterodimers.

The protein localises to the cell membrane. The protein is CASP-like protein 2B2 of Arabidopsis thaliana (Mouse-ear cress).